Here is a 182-residue protein sequence, read N- to C-terminus: Adenine phosphoribosyltransferase (182 aa).

Belongs to the purine/pyrimidine phosphoribosyltransferase family. Homodimer.

The protein resides in the cytoplasm. It catalyses the reaction AMP + diphosphate = 5-phospho-alpha-D-ribose 1-diphosphate + adenine. It functions in the pathway purine metabolism; AMP biosynthesis via salvage pathway; AMP from adenine: step 1/1. In terms of biological role, catalyzes a salvage reaction resulting in the formation of AMP, that is energically less costly than de novo synthesis. The protein is Adenine phosphoribosyltransferase of Campylobacter jejuni subsp. jejuni serotype O:23/36 (strain 81-176).